Consider the following 147-residue polypeptide: Hemoglobin subunit epsilon-M (147 aa).

One can recognise a Globin domain in the interval 3-147 (HFTPEDKTNI…VSSALGHKYH (145 aa)). Residues S14 and S51 each carry the phosphoserine modification. Residues H64 and H93 each coordinate heme b.

It belongs to the globin family. As to expression, red blood cells.

Functionally, hemoglobin epsilon chain is a beta-type chain found in early embryos. This is Hemoglobin subunit epsilon-M (HBE1) from Didelphis virginiana (North American opossum).